The following is a 381-amino-acid chain: KRR1 small subunit processome component homolog (381 aa).

A disordered region spans residues 1–51 (MASPSLERPEKGAGKSEFRNQKPKPENQDESELLTVPDGWKEPAFSKEDNP). Position 2 is an N-acetylalanine (A2). Phosphoserine is present on residues S3 and S5. Basic and acidic residues-rich tracts occupy residues 7-27 (ERPE…KPEN) and 39-51 (GWKE…EDNP). K24 is covalently cross-linked (Glycyl lysine isopeptide (Lys-Gly) (interchain with G-Cter in SUMO2)). In terms of domain architecture, KH spans 154–206 (KERFVKRRQRLIGPKGSTLKALELLTNCYIMVQGNTVSAIGPFSGLKEVRKVV). Basic residues predominate over residues 250–262 (NVNKRKEPKKKTV). Disordered regions lie at residues 250 to 278 (NVNK…ESQI) and 309 to 338 (AISK…ASTE). Residues K340 and K369 each participate in a glycyl lysine isopeptide (Lys-Gly) (interchain with G-Cter in SUMO2) cross-link.

Belongs to the KRR1 family. As to quaternary structure, part of the small subunit (SSU) processome, composed of more than 70 proteins and the RNA chaperone small nucleolar RNA (snoRNA) U3. (Microbial infection) Directly interacts with HIV-1 protein VPR. Also identified in a complex with NR3C1 and HIV-1 protein VPR.

The protein resides in the nucleus. The protein localises to the nucleolus. It is found in the cytoplasm. Its function is as follows. Part of the small subunit (SSU) processome, first precursor of the small eukaryotic ribosomal subunit. During the assembly of the SSU processome in the nucleolus, many ribosome biogenesis factors, an RNA chaperone and ribosomal proteins associate with the nascent pre-rRNA and work in concert to generate RNA folding, modifications, rearrangements and cleavage as well as targeted degradation of pre-ribosomal RNA by the RNA exosome. This is KRR1 small subunit processome component homolog from Homo sapiens (Human).